The chain runs to 470 residues: FRIGIDA-like protein 1 (470 aa).

Positions 336–369 (KDQNLESEFTQEKVEERVEELEKNKALRKRNTTN) form a coiled coil. Residues 355-400 (ELEKNKALRKRNTTNPPKQEPQQKGKKRTRDCKNGSQVPVPSQQLL) are disordered. Positions 388-400 (NGSQVPVPSQQLL) are enriched in polar residues.

Belongs to the Frigida family. As to quaternary structure, component of the transcription activator complex FRI-C composed of FRI, FRL1, SUF4, FLX and FES1. Interacts with FRI and SUF4. Expressed during seed development and in dry seed. Preferentially expressed in the chalazal endosperm during early stages of seed development.

In terms of biological role, required for FRI-mediated up-regulation of FLC transcripts, but not redundant with FRI and only partially redundant with FRL2. Required for the stabilization of the FRI-C complex. The polypeptide is FRIGIDA-like protein 1 (FRL1) (Arabidopsis thaliana (Mouse-ear cress)).